A 102-amino-acid chain; its full sequence is Ribosomal silencing factor RsfS (102 aa).

Belongs to the Iojap/RsfS family. In terms of assembly, interacts with ribosomal protein uL14 (rplN).

It localises to the cytoplasm. Functions as a ribosomal silencing factor. Interacts with ribosomal protein uL14 (rplN), blocking formation of intersubunit bridge B8. Prevents association of the 30S and 50S ribosomal subunits and the formation of functional ribosomes, thus repressing translation. This chain is Ribosomal silencing factor RsfS, found in Haemophilus influenzae (strain ATCC 51907 / DSM 11121 / KW20 / Rd).